Here is a 278-residue protein sequence, read N- to C-terminus: Shikimate dehydrogenase (NADP(+)) (278 aa).

Shikimate contacts are provided by residues 23–25 and threonine 70; that span reads SRS. Catalysis depends on lysine 74, which acts as the Proton acceptor. Glutamate 86 contacts NADP(+). Positions 95 and 110 each coordinate shikimate. NADP(+) contacts are provided by residues 135-139, 159-164, and methionine 224; these read GAGGA and NRTKEK. A shikimate-binding site is contributed by tyrosine 226. Residue glycine 248 coordinates NADP(+).

The protein belongs to the shikimate dehydrogenase family. Homodimer.

The enzyme catalyses shikimate + NADP(+) = 3-dehydroshikimate + NADPH + H(+). The protein operates within metabolic intermediate biosynthesis; chorismate biosynthesis; chorismate from D-erythrose 4-phosphate and phosphoenolpyruvate: step 4/7. Its function is as follows. Involved in the biosynthesis of the chorismate, which leads to the biosynthesis of aromatic amino acids. Catalyzes the reversible NADPH linked reduction of 3-dehydroshikimate (DHSA) to yield shikimate (SA). This chain is Shikimate dehydrogenase (NADP(+)), found in Alcanivorax borkumensis (strain ATCC 700651 / DSM 11573 / NCIMB 13689 / SK2).